A 153-amino-acid polypeptide reads, in one-letter code: UPF0260 protein YcgN (153 aa).

The protein belongs to the UPF0260 family.

In Salmonella dublin (strain CT_02021853), this protein is UPF0260 protein YcgN.